We begin with the raw amino-acid sequence, 339 residues long: PAFGEVNQLGGVFVNGRPLPNAIRLRIVELAQLGIRPCDISRQLRVSHGCVSKILARYNETGSILPGAIGGSKPRVTTPTVVKHIRTYKQRDPGIFAWEIRDRLLADGVCDKYNVPSVSSISRILRNKIGNLSQQGHYESYKQHQPPPQPPLPYNHIYSYPSPIAAAGAKVPTPPGVPAIPGTMAMPRTWPSSHSVTDILGIRSITDQVSDTSSYPSPKVEEWSSLGRSSFPPAAQHAVNGLEKSSLEQEAKYSQAHNGLPAVGSFVSAPAMSPYATSAQVSPYMPYSAAPSSYMAGHGWQHTAGTPLSPHGCDLPASLAFKGVQTAREGSHSVTASAL.

Positions 2-128 form a DNA-binding region, paired; the sequence is AFGEVNQLGG…SSISRILRNK (127 aa). A PAI subdomain region spans residues 5-61; the sequence is EVNQLGGVFVNGRPLPNAIRLRIVELAQLGIRPCDISRQLRVSHGCVSKILARYNET. Residues 80–128 form an RED subdomain region; it reads TVVKHIRTYKQRDPGIFAWEIRDRLLADGVCDKYNVPSVSSISRILRNK.

It localises to the nucleus. The protein is Paired box protein Pax-9 (PAX9) of Gallus gallus (Chicken).